The primary structure comprises 175 residues: Type-2 ice-structuring protein (175 aa).

The signal sequence occupies residues 1–16 (MLAALLVCAMVALTRA). A propeptide spanning residues 17 to 33 (ANGDTGKEAVMTGSSGK) is cleaved from the precursor. A C-type lectin domain is found at 36 to 163 (TECPTDWKMF…LHASVCAKPA (128 aa)). Intrachain disulfides connect C38-C49, C66-C159, C103-C134, C123-C145, and C135-C151.

It is found in the secreted. Antifreeze proteins lower the blood freezing point. This chain is Type-2 ice-structuring protein, found in Osmerus mordax (Rainbow smelt).